A 371-amino-acid polypeptide reads, in one-letter code: tRNA-specific 2-thiouridylase MnmA (371 aa).

Residues 13–20 (GMSGGVDS) and Met39 contribute to the ATP site. The segment at 99–101 (NPD) is interaction with target base in tRNA. Cys104 acts as the Nucleophile in catalysis. Cys104 and Cys200 are disulfide-bonded. Gly128 provides a ligand contact to ATP. Residues 150-152 (KDQ) are interaction with tRNA. The active-site Cysteine persulfide intermediate is Cys200. The segment at 309-310 (RY) is interaction with tRNA.

It belongs to the MnmA/TRMU family.

Its subcellular location is the cytoplasm. It carries out the reaction S-sulfanyl-L-cysteinyl-[protein] + uridine(34) in tRNA + AH2 + ATP = 2-thiouridine(34) in tRNA + L-cysteinyl-[protein] + A + AMP + diphosphate + H(+). In terms of biological role, catalyzes the 2-thiolation of uridine at the wobble position (U34) of tRNA, leading to the formation of s(2)U34. This Bacillus subtilis (strain 168) protein is tRNA-specific 2-thiouridylase MnmA.